Reading from the N-terminus, the 723-residue chain is Threonine--tRNA ligase, mitochondrial (723 aa).

S57 carries the post-translational modification Phosphoserine. The region spanning R64–T126 is the TGS domain.

It belongs to the class-II aminoacyl-tRNA synthetase family. In terms of assembly, homodimer.

The protein localises to the mitochondrion matrix. It catalyses the reaction tRNA(Thr) + L-threonine + ATP = L-threonyl-tRNA(Thr) + AMP + diphosphate + H(+). Catalyzes the attachment of threonine to tRNA(Thr) in a two-step reaction: threonine is first activated by ATP to form Thr-AMP and then transferred to the acceptor end of tRNA(Thr). Also edits incorrectly charged tRNA(Thr) via its editing domain. In Rattus norvegicus (Rat), this protein is Threonine--tRNA ligase, mitochondrial (Tars2).